The chain runs to 81 residues: Antimicrobial peptide Con22 (81 aa).

An N-terminal signal peptide occupies residues 1–22; the sequence is MNAKVMLVCLLVTMLVMEPAEA. Residues 66-81 constitute a propeptide that is removed on maturation; the sequence is EAGQIPFDEFMNVLYS.

Belongs to the non-disulfide-bridged peptide (NDBP) superfamily. Long chain multifunctional peptide (group 2) family. Expressed by the venom gland.

Its subcellular location is the secreted. The protein resides in the target cell membrane. At high concentrations, acts as a pore former in cellular membranes and causes the leakage of the cells. At submicromolar concentrations, degranulates granulocytes and has a weak hemolytic activity against human erythrocytes. Also strongly inhibits the production of superoxide anions. Has a strong antibacterial activity against Gram-negative bacteria but is less active against Gram-positive bacteria. Also has antifungal activity. In Urodacus yaschenkoi (Inland robust scorpion), this protein is Antimicrobial peptide Con22.